The chain runs to 441 residues: Cobyrinate a,c-diamide synthase (441 aa).

Residues 243–434 form the GATase cobBQ-type domain; that stretch reads TVAVADDAAF…AHVHPESTAF (192 aa). Cys-323 acts as the Nucleophile in catalysis.

Belongs to the CobB/CbiA family. Mg(2+) serves as cofactor.

It catalyses the reaction cob(II)yrinate + 2 L-glutamine + 2 ATP + 2 H2O = cob(II)yrinate a,c diamide + 2 L-glutamate + 2 ADP + 2 phosphate + 2 H(+). It functions in the pathway cofactor biosynthesis; adenosylcobalamin biosynthesis; cob(II)yrinate a,c-diamide from sirohydrochlorin (anaerobic route): step 10/10. In terms of biological role, catalyzes the ATP-dependent amidation of the two carboxylate groups at positions a and c of cobyrinate, using either L-glutamine or ammonia as the nitrogen source. The sequence is that of Cobyrinate a,c-diamide synthase from Halobacterium salinarum (strain ATCC 700922 / JCM 11081 / NRC-1) (Halobacterium halobium).